The sequence spans 115 residues: Large ribosomal subunit protein bL20 (115 aa).

The protein belongs to the bacterial ribosomal protein bL20 family.

In terms of biological role, binds directly to 23S ribosomal RNA and is necessary for the in vitro assembly process of the 50S ribosomal subunit. It is not involved in the protein synthesizing functions of that subunit. This chain is Large ribosomal subunit protein bL20, found in Cytophaga hutchinsonii (strain ATCC 33406 / DSM 1761 / CIP 103989 / NBRC 15051 / NCIMB 9469 / D465).